Reading from the N-terminus, the 137-residue chain is Putative pre-16S rRNA nuclease (137 aa).

The protein belongs to the YqgF nuclease family.

It is found in the cytoplasm. Could be a nuclease involved in processing of the 5'-end of pre-16S rRNA. The sequence is that of Putative pre-16S rRNA nuclease from Oceanobacillus iheyensis (strain DSM 14371 / CIP 107618 / JCM 11309 / KCTC 3954 / HTE831).